Reading from the N-terminus, the 242-residue chain is UPF0173 metal-dependent hydrolase APE_1117 (242 aa).

The protein belongs to the UPF0173 family.

This is UPF0173 metal-dependent hydrolase APE_1117 from Aeropyrum pernix (strain ATCC 700893 / DSM 11879 / JCM 9820 / NBRC 100138 / K1).